A 291-amino-acid chain; its full sequence is 4-hydroxy-tetrahydrodipicolinate synthase (291 aa).

Threonine 44 contributes to the pyruvate binding site. Tyrosine 132 acts as the Proton donor/acceptor in catalysis. Lysine 160 serves as the catalytic Schiff-base intermediate with substrate. Valine 202 is a pyruvate binding site.

Belongs to the DapA family. Homotetramer; dimer of dimers.

Its subcellular location is the cytoplasm. The catalysed reaction is L-aspartate 4-semialdehyde + pyruvate = (2S,4S)-4-hydroxy-2,3,4,5-tetrahydrodipicolinate + H2O + H(+). It participates in amino-acid biosynthesis; L-lysine biosynthesis via DAP pathway; (S)-tetrahydrodipicolinate from L-aspartate: step 3/4. Catalyzes the condensation of (S)-aspartate-beta-semialdehyde [(S)-ASA] and pyruvate to 4-hydroxy-tetrahydrodipicolinate (HTPA). This Clostridium perfringens (strain SM101 / Type A) protein is 4-hydroxy-tetrahydrodipicolinate synthase.